Reading from the N-terminus, the 271-residue chain is Putative phosphoenolpyruvate synthase regulatory protein (271 aa).

151–158 (GVSRSGKT) is a binding site for ADP.

The protein belongs to the pyruvate, phosphate/water dikinase regulatory protein family. PSRP subfamily.

The enzyme catalyses [pyruvate, water dikinase] + ADP = [pyruvate, water dikinase]-phosphate + AMP + H(+). The catalysed reaction is [pyruvate, water dikinase]-phosphate + phosphate + H(+) = [pyruvate, water dikinase] + diphosphate. Functionally, bifunctional serine/threonine kinase and phosphorylase involved in the regulation of the phosphoenolpyruvate synthase (PEPS) by catalyzing its phosphorylation/dephosphorylation. The chain is Putative phosphoenolpyruvate synthase regulatory protein from Burkholderia thailandensis (strain ATCC 700388 / DSM 13276 / CCUG 48851 / CIP 106301 / E264).